Reading from the N-terminus, the 942-residue chain is Protein NLP1 (942 aa).

The span at 1 to 11 (MEQKPSPPPPP) shows a compositional bias: pro residues. Disordered stretches follow at residues 1 to 32 (MEQKPSPPPPPRSDEEEDGLMGCGMGGTGDIA), 77 to 106 (TTPAPAAGEDDRDEAEMPSRGGGGLEVSPA), 594 to 620 (VKENTCSSDPSNSNSDKAVEKRRTKTE), 723 to 753 (FQLEPSVPDRPCEGRFTSHTSGSNSISPSCS), and 759 to 778 (SLGCSSVPKTQQQHGSAPQL). Positions 21–32 (MGCGMGGTGDIA) are enriched in gly residues. The segment covering 597–609 (NTCSSDPSNSNSD) has biased composition (polar residues). Positions 609–690 (DKAVEKRRTK…IDSVHGPEGT (82 aa)) constitute an RWP-RK domain. Positions 743–753 (SGSNSISPSCS) are enriched in low complexity. Residues 765-774 (VPKTQQQHGS) are compositionally biased toward polar residues. Residues 844-927 (SLKIKAIYGE…QTVRILVNPS (84 aa)) form the PB1 domain.

Its subcellular location is the nucleus. In terms of biological role, probable transcription factor. The sequence is that of Protein NLP1 (NLP1) from Oryza sativa subsp. japonica (Rice).